We begin with the raw amino-acid sequence, 493 residues long: MAAAAEGDEDPRWRRCNTDCVYFLASPFTCTKGSKCEYRHADGARFNRRNCWYWFKGNCVNPSCTFRHPPLENLNKTKSLADPLSLCSTSVKAANPCYFYYNSHCSKGDNCPYLHEPLTSNDAVGTSCKATTSNPAVSKSYVGDEMVEESKDTITNPCQDTSCHIKEVPVSINPEFGEAEAVSGALETSTDIDEYMKCSAVSDLNSGDSTMDHTEQDERDSSPGFDVLVDDCLSNKSDLEHQLTTESDNKVLHAEYGIRDPVLYDMYYHDPEYYNYEPEFCGLDDRQGYLYLCQPNGAHEHESEITLGHLLPQNTEVTSDEYDRRFFNPRNFTSSVADTNFVHQHTQIRHISKRRPENRKGAKGKKDCIKRSRCLEPKNSTQQIESMPTRQRKDYLMGECPQPANHATFRGRRKKNRGKQQHVLSAKSSEHPTADFTGPKTLAQIKEEKCKSNSSFSHSTACTPNVRSFSDDFEGPKSLTELLMTKSRSSVGK.

3 consecutive C3H1-type zinc fingers follow at residues 14–43 (RRCN…HADG), 45–71 (RFNR…HPPL), and 91–118 (VKAA…HEPL). The interval 397–477 (MGECPQPANH…SFSDDFEGPK (81 aa)) is disordered. A compositionally biased stretch (basic residues) spans 409-420 (FRGRRKKNRGKQ). The span at 452 to 468 (SNSSFSHSTACTPNVRS) shows a compositional bias: polar residues.

The chain is Zinc finger CCCH domain-containing protein 34 from Oryza sativa subsp. japonica (Rice).